Here is a 413-residue protein sequence, read N- to C-terminus: Floricaula/leafy homolog 1 (413 aa).

Disordered regions lie at residues 154 to 177 (EGLS…GGTT) and 191 to 239 (QRRR…RQRE). The segment covering 201–210 (GRERRGRASA) has biased composition (basic and acidic residues). The segment covering 211-225 (EEDEETEEGQEDEWN) has biased composition (acidic residues). 3 consecutive DNA-binding regions follow at residues 238-242 (REHPF), 307-314 (NKPKMRHY), and 378-381 (YVPT).

It belongs to the FLO/LFY family. Expressed in floral meristems and in indeterminate vegetative meristems.

It is found in the nucleus. In terms of biological role, probable transcription factor that act to specify determinacy in the progenitor cells for both flowers and leaves. The polypeptide is Floricaula/leafy homolog 1 (FL1) (Nicotiana tabacum (Common tobacco)).